Reading from the N-terminus, the 272-residue chain is Thiazole synthase (272 aa).

Lysine 111 (schiff-base intermediate with DXP) is an active-site residue. 1-deoxy-D-xylulose 5-phosphate contacts are provided by residues glycine 172, alanine 198–glycine 199, and asparagine 220–serine 221. The segment at serine 249–glutamine 272 is disordered. A compositionally biased stretch (polar residues) spans alanine 258–glutamine 272.

Belongs to the ThiG family. In terms of assembly, homotetramer. Forms heterodimers with either ThiH or ThiS.

The protein localises to the cytoplasm. It carries out the reaction [ThiS sulfur-carrier protein]-C-terminal-Gly-aminoethanethioate + 2-iminoacetate + 1-deoxy-D-xylulose 5-phosphate = [ThiS sulfur-carrier protein]-C-terminal Gly-Gly + 2-[(2R,5Z)-2-carboxy-4-methylthiazol-5(2H)-ylidene]ethyl phosphate + 2 H2O + H(+). It participates in cofactor biosynthesis; thiamine diphosphate biosynthesis. In terms of biological role, catalyzes the rearrangement of 1-deoxy-D-xylulose 5-phosphate (DXP) to produce the thiazole phosphate moiety of thiamine. Sulfur is provided by the thiocarboxylate moiety of the carrier protein ThiS. In vitro, sulfur can be provided by H(2)S. The chain is Thiazole synthase from Synechococcus sp. (strain CC9605).